Consider the following 514-residue polypeptide: Probable drug/proton antiporter YHK8 (514 aa).

At 1–74 the chain is on the cytoplasmic side; sequence MVAEFQIASA…RHMSTARRYY (74 aa). A helical membrane pass occupies residues 75–95; sequence ISSLITFTSMVITMISSSWTL. Over 96–111 the chain is Extracellular; it reads PSTHIIEHFHISHEVS. The chain crosses the membrane as a helical span at residues 112-132; sequence TLGITLYVFGLGIGPLFLSPL. Topologically, residues 133–141 are cytoplasmic; that stretch reads SELYGRRIT. A helical transmembrane segment spans residues 142–162; sequence FLYALTLSIIWQCLTIWSKTI. The Extracellular segment spans residues 163–170; it reads TGVMFGRF. A helical transmembrane segment spans residues 171-191; that stretch reads LSGFFGSAFLSVAGGAIADIF. The Cytoplasmic portion of the chain corresponds to 192 to 200; that stretch reads DKDQIGIPM. A helical transmembrane segment spans residues 201–221; it reads AIYTTSAFLGPSLGPIIGGAL. Over 222 to 227 the chain is Extracellular; the sequence is YHQSYK. Residues 228–248 form a helical membrane-spanning segment; the sequence is WTFITLLITSGCCLVMIIFTI. The Cytoplasmic portion of the chain corresponds to 249–307; it reads PETYKPMLLIRKAKRLRKEKNDQRYYAVLEVTREQTSLLSAIFLSTKRPFGLLLRDRMM. Residues 308 to 328 form a helical membrane-spanning segment; it reads GVLCFYTGLELAIIYLYFVAF. The Extracellular segment spans residues 329 to 342; sequence PYVFKKLYNFGPME. The chain crosses the membrane as a helical span at residues 343–363; it reads IACSYIGIMVGMILSAPTCLL. Residues 364–386 are Cytoplasmic-facing; that stretch reads FQKTFEWRVKRNNGVKTPEMRFE. Residues 387–407 traverse the membrane as a helical segment; that stretch reads PLFYGAFLTPVGLFIFAFTCY. Residues 408 to 412 are Extracellular-facing; that stretch reads KHVHW. The chain crosses the membrane as a helical span at residues 413-433; the sequence is IAPIIGSAIFGSGVYFVFTGV. The Cytoplasmic portion of the chain corresponds to 434–447; it reads FAYTVDAYRRYAAS. A helical membrane pass occupies residues 448-468; sequence GMACNTFVRCIMAGVFPLFGL. The Extracellular portion of the chain corresponds to 469–477; that stretch reads QMYKSMGVN. Residues 478-498 traverse the membrane as a helical segment; it reads WAGFLLAMVTVAMIPVPFLFT. Topologically, residues 499-514 are cytoplasmic; it reads KYGARLRAKSPYAWDD.

Belongs to the major facilitator superfamily. CAR1 family.

It is found in the membrane. In terms of biological role, probable drug/proton antiporter. The polypeptide is Probable drug/proton antiporter YHK8 (YHK8) (Saccharomyces cerevisiae (strain ATCC 204508 / S288c) (Baker's yeast)).